Here is a 309-residue protein sequence, read N- to C-terminus: Homoserine kinase (309 aa).

Residue 91–101 (PIGSGLGSSAC) participates in ATP binding.

This sequence belongs to the GHMP kinase family. Homoserine kinase subfamily.

Its subcellular location is the cytoplasm. The enzyme catalyses L-homoserine + ATP = O-phospho-L-homoserine + ADP + H(+). It functions in the pathway amino-acid biosynthesis; L-threonine biosynthesis; L-threonine from L-aspartate: step 4/5. Its function is as follows. Catalyzes the ATP-dependent phosphorylation of L-homoserine to L-homoserine phosphate. This Salmonella dublin (strain CT_02021853) protein is Homoserine kinase.